A 387-amino-acid chain; its full sequence is Phosphoglycerate kinase (387 aa).

Residues Asp21–Asn23, Arg36, His59–Arg62, Arg113, and Arg146 contribute to the substrate site. Residues Lys197, Glu314, and Gly340–Thr343 contribute to the ATP site.

This sequence belongs to the phosphoglycerate kinase family. In terms of assembly, monomer.

It localises to the cytoplasm. It carries out the reaction (2R)-3-phosphoglycerate + ATP = (2R)-3-phospho-glyceroyl phosphate + ADP. Its pathway is carbohydrate degradation; glycolysis; pyruvate from D-glyceraldehyde 3-phosphate: step 2/5. The polypeptide is Phosphoglycerate kinase (Salmonella schwarzengrund (strain CVM19633)).